Here is a 120-residue protein sequence, read N- to C-terminus: Large ribosomal subunit protein bL12 (120 aa).

It belongs to the bacterial ribosomal protein bL12 family. Homodimer. Part of the ribosomal stalk of the 50S ribosomal subunit. Forms a multimeric L10(L12)X complex, where L10 forms an elongated spine to which 2 to 4 L12 dimers bind in a sequential fashion. Binds GTP-bound translation factors.

Forms part of the ribosomal stalk which helps the ribosome interact with GTP-bound translation factors. Is thus essential for accurate translation. This Lactobacillus acidophilus (strain ATCC 700396 / NCK56 / N2 / NCFM) protein is Large ribosomal subunit protein bL12.